A 215-amino-acid polypeptide reads, in one-letter code: MSARLQDHFNNVEKILNGFSVECYVAYGEINISIKDQRDIHLVLKKLKKEYHFKQLTDITAVDYLTYGQSDWQVGKVVSQTGFSRGRQQGFKTADVNNRFEIIYQLLSMANNVRVRVKCKLKDAQIIMVDSVEDLWPSANWAEREVYDMFGIYFNNHPDLRRVLTDYGFVGHPLRKDFPQTGYVEMRYDENLGKVVYEPVEIDDRVNAPRVIRNQ.

It belongs to the complex I 30 kDa subunit family. NDH-1 is composed of 14 different subunits. Subunits NuoB, C, D, E, F, and G constitute the peripheral sector of the complex.

The protein localises to the cell inner membrane. The catalysed reaction is a quinone + NADH + 5 H(+)(in) = a quinol + NAD(+) + 4 H(+)(out). In terms of biological role, NDH-1 shuttles electrons from NADH, via FMN and iron-sulfur (Fe-S) centers, to quinones in the respiratory chain. The immediate electron acceptor for the enzyme in this species is believed to be ubiquinone. Couples the redox reaction to proton translocation (for every two electrons transferred, four hydrogen ions are translocated across the cytoplasmic membrane), and thus conserves the redox energy in a proton gradient. In Francisella philomiragia subsp. philomiragia (strain ATCC 25017 / CCUG 19701 / FSC 153 / O#319-036), this protein is NADH-quinone oxidoreductase subunit C.